A 364-amino-acid chain; its full sequence is Mannose-1-phosphate guanyltransferase (364 aa).

It belongs to the transferase hexapeptide repeat family.

It localises to the cytoplasm. The enzyme catalyses alpha-D-mannose 1-phosphate + GTP + H(+) = GDP-alpha-D-mannose + diphosphate. The protein operates within nucleotide-sugar biosynthesis; GDP-alpha-D-mannose biosynthesis; GDP-alpha-D-mannose from alpha-D-mannose 1-phosphate (GTP route): step 1/1. Its function is as follows. Involved in cell wall synthesis where it is required for glycosylation. Involved in cell cycle progression through cell-size checkpoint. This is Mannose-1-phosphate guanyltransferase (mpg1) from Aspergillus oryzae (strain ATCC 42149 / RIB 40) (Yellow koji mold).